Here is a 639-residue protein sequence, read N- to C-terminus: tRNA 5-methylaminomethyl-2-thiouridine biosynthesis bifunctional protein MnmC (639 aa).

Positions 1-228 (MSEPIEWLED…KRDNLQATYA (228 aa)) are tRNA (mnm(5)s(2)U34)-methyltransferase. The FAD-dependent cmnm(5)s(2)U34 oxidoreductase stretch occupies residues 254–639 (VGAGLAGAAV…SERWLGYEPQ (386 aa)).

The protein in the N-terminal section; belongs to the methyltransferase superfamily. tRNA (mnm(5)s(2)U34)-methyltransferase family. This sequence in the C-terminal section; belongs to the DAO family. It depends on FAD as a cofactor.

The protein localises to the cytoplasm. The enzyme catalyses 5-aminomethyl-2-thiouridine(34) in tRNA + S-adenosyl-L-methionine = 5-methylaminomethyl-2-thiouridine(34) in tRNA + S-adenosyl-L-homocysteine + H(+). Catalyzes the last two steps in the biosynthesis of 5-methylaminomethyl-2-thiouridine (mnm(5)s(2)U) at the wobble position (U34) in tRNA. Catalyzes the FAD-dependent demodification of cmnm(5)s(2)U34 to nm(5)s(2)U34, followed by the transfer of a methyl group from S-adenosyl-L-methionine to nm(5)s(2)U34, to form mnm(5)s(2)U34. The chain is tRNA 5-methylaminomethyl-2-thiouridine biosynthesis bifunctional protein MnmC from Acidovorax sp. (strain JS42).